We begin with the raw amino-acid sequence, 144 residues long: Putative HTH-type transcriptional regulator aq_268 (144 aa).

In terms of domain architecture, HTH rrf2-type spans 2-133; that stretch reads IFSDTVRYAL…KGTTIKDLIN (132 aa).

The chain is Putative HTH-type transcriptional regulator aq_268 from Aquifex aeolicus (strain VF5).